The chain runs to 178 residues: Nuclear transcription factor Y subunit B-2 (178 aa).

The DNA-binding element occupies 39–45; that stretch reads LPIANIS. The tract at residues 66 to 77 is subunit association domain (SAD); it reads LQECVSEFISFV. A disordered region spans residues 131 to 156; the sequence is SSKAGDGSVKKDTIGPHSGASSSSAQ.

This sequence belongs to the NFYB/HAP3 subunit family. In terms of assembly, heterotrimeric transcription factor composed of three components, NF-YA, NF-YB and NF-YC. NF-YB and NF-YC must interact and dimerize for NF-YA association and DNA binding. Interacts with NFYC4 and NFYC6. Ubiquitous.

The protein resides in the nucleus. Functionally, component of the NF-Y/HAP transcription factor complex. The NF-Y complex stimulates the transcription of various genes by recognizing and binding to a CCAAT motif in promoters. May regulate the expression of photosynthetic genes, and may be involved in chloroplast and amyloplast development. This Oryza sativa subsp. japonica (Rice) protein is Nuclear transcription factor Y subunit B-2 (NFYB2).